Here is a 211-residue protein sequence, read N- to C-terminus: Ribosomal RNA large subunit methyltransferase E (211 aa).

Residues glycine 60, tryptophan 62, aspartate 80, aspartate 96, and aspartate 121 each contribute to the S-adenosyl-L-methionine site. Lysine 161 acts as the Proton acceptor in catalysis.

This sequence belongs to the class I-like SAM-binding methyltransferase superfamily. RNA methyltransferase RlmE family.

Its subcellular location is the cytoplasm. It carries out the reaction uridine(2552) in 23S rRNA + S-adenosyl-L-methionine = 2'-O-methyluridine(2552) in 23S rRNA + S-adenosyl-L-homocysteine + H(+). Functionally, specifically methylates the uridine in position 2552 of 23S rRNA at the 2'-O position of the ribose in the fully assembled 50S ribosomal subunit. This is Ribosomal RNA large subunit methyltransferase E from Cellvibrio japonicus (strain Ueda107) (Pseudomonas fluorescens subsp. cellulosa).